The chain runs to 222 residues: Probable transaldolase (222 aa).

The active-site Schiff-base intermediate with substrate is Lys-91.

This sequence belongs to the transaldolase family. Type 3B subfamily.

It is found in the cytoplasm. The catalysed reaction is D-sedoheptulose 7-phosphate + D-glyceraldehyde 3-phosphate = D-erythrose 4-phosphate + beta-D-fructose 6-phosphate. Its pathway is carbohydrate degradation; pentose phosphate pathway; D-glyceraldehyde 3-phosphate and beta-D-fructose 6-phosphate from D-ribose 5-phosphate and D-xylulose 5-phosphate (non-oxidative stage): step 2/3. Transaldolase is important for the balance of metabolites in the pentose-phosphate pathway. This is Probable transaldolase from Chlorobium luteolum (strain DSM 273 / BCRC 81028 / 2530) (Pelodictyon luteolum).